Reading from the N-terminus, the 131-residue chain is Profilin (131 aa).

Belongs to the profilin family. Occurs in many kinds of cells as a complex with monomeric actin in a 1:1 ratio.

It localises to the cytoplasm. The protein resides in the cytoskeleton. In terms of biological role, binds to actin and affects the structure of the cytoskeleton. At high concentrations, profilin prevents the polymerization of actin, whereas it enhances it at low concentrations. By binding to PIP2, it inhibits the formation of IP3 and DG. This is Profilin (PRO1) from Cynodon dactylon (Bermuda grass).